We begin with the raw amino-acid sequence, 125 residues long: Barwin (125 aa).

Gln-1 is subject to Pyrrolidone carboxylic acid. The Barwin domain occupies 1–125; the sequence is QQANDVRATY…VNYQFVDCRD (125 aa). Intrachain disulfides connect Cys-31/Cys-63, Cys-52/Cys-86, and Cys-66/Cys-123.

Functionally, may be involved in a defense mechanism. Probable plant lectin. Binds weakly a chitin analog. The chain is Barwin from Hordeum vulgare (Barley).